The sequence spans 234 residues: Sugar fermentation stimulation protein homolog (234 aa).

The protein belongs to the SfsA family.

The protein is Sugar fermentation stimulation protein homolog of Shewanella sp. (strain MR-4).